The chain runs to 342 residues: Probable endoglucanase (342 aa).

Residues 1-20 (MSVMAAMGGAQVLSSTGAFA) form the signal peptide. The Proton donor role is filled by Glu-57. The active-site Nucleophile is the Asp-114.

The protein belongs to the glycosyl hydrolase 8 (cellulase D) family.

Its subcellular location is the secreted. The enzyme catalyses Endohydrolysis of (1-&gt;4)-beta-D-glucosidic linkages in cellulose, lichenin and cereal beta-D-glucans.. Functionally, enzyme capable of hydrolyzing carboxy-methyl-cellulose (CMC). This is Probable endoglucanase (cmcAX) from Novacetimonas hansenii (Komagataeibacter hansenii).